Consider the following 675-residue polypeptide: Dihydrolipoyllysine-residue acetyltransferase component of pyruvate dehydrogenase complex (675 aa).

The Lipoyl-binding 1 domain occupies 2–77 (AFSVEMPELG…DVGGVIAIIG (76 aa)). Lysine 43 is subject to N6-lipoyllysine. The segment at 77–124 (GDADETPANEAPADEAPAPAEEEEPVKEEPKKEAAPEAPAATGAATDV) is disordered. Low complexity-rich tracts occupy residues 84–95 (ANEAPADEAPAP) and 112–124 (PEAP…ATDV). The Lipoyl-binding 2 domain maps to 121–196 (ATDVEMPELG…DVGAVIARIG (76 aa)). An N6-lipoyllysine modification is found at lysine 162. Residues 200-240 (AAAAPAEEEAAPAEEEEPVKEEPKKEAAPEAPAATGAATDV) form a disordered region. Over residues 205 to 218 (AEEEAAPAEEEEPV) the composition is skewed to acidic residues. In terms of domain architecture, Lipoyl-binding 3 spans 237–312 (ATDVEMPELG…DVGAVIARIG (76 aa)). Position 278 is an N6-lipoyllysine (lysine 278). The segment at 316-368 (AAAAPAEEEAAPAEEEEPVKEEPKKEEPKKEEPKKEAATTPAAASATVSASGD) is disordered. Over residues 321–334 (AEEEAAPAEEEEPV) the composition is skewed to acidic residues. Positions 335-352 (KEEPKKEEPKKEEPKKEA) are enriched in basic and acidic residues. Over residues 353–366 (ATTPAAASATVSAS) the composition is skewed to low complexity. The Peripheral subunit-binding (PSBD) domain occupies 372 to 409 (YVTPLVRKLAEKHGVDLNTVTGTGIGGRIRKQDVLAAA). Catalysis depends on residues histidine 645 and aspartate 649.

This sequence belongs to the 2-oxoacid dehydrogenase family. Forms a 24-polypeptide structural core with octahedral symmetry. Part of an unusual ODH/PDH supercomplex, consisting of AceE (E1), AceF (E2), and Lpd (E3) together with OdhA (E1+E2). (R)-lipoate is required as a cofactor.

The catalysed reaction is N(6)-[(R)-dihydrolipoyl]-L-lysyl-[protein] + acetyl-CoA = N(6)-[(R)-S(8)-acetyldihydrolipoyl]-L-lysyl-[protein] + CoA. Is essential for both 2-oxoglutarate dehydrogenase (ODH) and pyruvate dehydrogenase (PDH) activities, but AceF has exclusively transacetylase (and no transsuccinylase) activity. The lipoyl residues required for ODH activity are likely provided by AceF. This chain is Dihydrolipoyllysine-residue acetyltransferase component of pyruvate dehydrogenase complex (aceF), found in Corynebacterium glutamicum (strain ATCC 13032 / DSM 20300 / JCM 1318 / BCRC 11384 / CCUG 27702 / LMG 3730 / NBRC 12168 / NCIMB 10025 / NRRL B-2784 / 534).